We begin with the raw amino-acid sequence, 461 residues long: uncharacterized protein (461 aa).

LRR repeat units lie at residues 119–140 (NVKK…EKMS), 141–162 (LLEV…QHCK), and 163–184 (NLKE…EYLK). The region spanning 197 to 237 (NPCVGEGGQEYRRKVIRVLPNLTKLDDKPVTTTDHQEAIED) is the LRRCT domain.

This is an uncharacterized protein from Caenorhabditis elegans.